Reading from the N-terminus, the 760-residue chain is H(+)/Cl(-) exchange transporter 4 (760 aa).

The Cytoplasmic segment spans residues 1–67 (MVNAGAMSGS…WEFIKSLLDA (67 aa)). Residues 14 to 63 (MDFLDEPFPDVGTYEDFHTIDWLREKSRDTDRHRKITSKSKESIWEFIKS) are required for localization in the endoplasmic reticulum. The next 2 membrane-spanning stretches (helical) occupy residues 68-105 (WSGWVVMLLIGLLAGTLAGVIDLAVDWMTDLKEGVCLS) and 151-174 (LNYLMYILWALLFAFLAVSLVRVF). The short motif at 180–184 (GSGIP) is the Selectivity filter part_1 element. Residue Ser181 participates in chloride binding. An intramembrane region (helical) is located at residues 183 to 190 (IPEIKTIL). Helical transmembrane passes span 200–218 (GKWTLLIKTVTLVLVVSSG) and 224–243 (EGPLVHVACCCGNFFSSLFS). A Selectivity filter part_2 motif is present at residues 222-226 (GKEGP). 2 consecutive intramembrane regions (helical) follow at residues 255–267 (VLSAAAAAGVSVA) and 271–279 (PIGGVLFSL). The next 5 helical transmembrane spans lie at 291-309 (LWRSFFAALVAAFTLRSIN), 333-358 (FPFILLGVFGGLWGTLFIRCNIAWCR), 365-385 (LGKYPVLEVIVVTAITAIIAY), 442-462 (MWQLALALIFKIVVTIFTFGM), and 467-486 (GLFIPSMAVGAIAGRMVGIG). Positions 467 to 471 (GLFIP) match the Selectivity filter part_3 motif. Chloride is bound at residue Phe469. 2 consecutive intramembrane regions (helical) follow at residues 514-528 (GLYAMVGAAACLGGV) and 532-543 (TVSLVVIMFELT). The note=Loop between two helices intramembrane region spans 544-547 (GGLE). A helical membrane pass occupies residues 548–566 (YIVPLMAAAVTSKWVADAF). The Cytoplasmic portion of the chain corresponds to 567–760 (GKEGIYEAHI…NQDPESIMFN (194 aa)). Residue Tyr572 participates in chloride binding. Residues 600-666 (MRPRRGEPPL…AIKNARQRQE (67 aa)) form the CBS 1 domain. ATP-binding positions include Ser610 and 631-633 (YNG). A required for localization in the endoplasmic reticulum region spans residues 667-696 (GIVSNSIMYFTEEPPELPANSPHPLKLRRI). The CBS 2 domain maps to 697–755 (LNLSPFTVTDHTPMETVVDIFRKLGLRQCLVTRSGRLLGIITKKDVLRHMAQMANQDPE). Residue 738-741 (TKKD) participates in ATP binding.

It belongs to the chloride channel (TC 2.A.49) family. ClC-4/CLCN4 subfamily. In terms of assembly, monomer. Forms heterodimers with CLCN3. In terms of tissue distribution, abundant in skeletal muscle and also detectable in brain and heart.

Its subcellular location is the early endosome membrane. The protein localises to the late endosome membrane. It is found in the endoplasmic reticulum membrane. It localises to the lysosome membrane. The protein resides in the recycling endosome membrane. Its function is as follows. Strongly outwardly rectifying, electrogenic H(+)/Cl(-)exchanger which mediates the exchange of chloride ions against protons. The CLC channel family contains both chloride channels and proton-coupled anion transporters that exchange chloride or another anion for protons. The presence of conserved gating glutamate residues is typical for family members that function as antiporters. This is H(+)/Cl(-) exchange transporter 4 (CLCN4) from Homo sapiens (Human).